Consider the following 33-residue polypeptide: uncharacterized protein (33 aa).

Its subcellular location is the cytoplasm. The protein localises to the nucleus. This is an uncharacterized protein from Schizosaccharomyces pombe (strain 972 / ATCC 24843) (Fission yeast).